Here is a 175-residue protein sequence, read N- to C-terminus: Interleukin-10 (175 aa).

Positions 1-18 (MPSSALLYCLIFLAGVAA) are cleaved as a signal peptide. 2 disulfide bridges follow: Cys26/Cys122 and Cys76/Cys128. An N-linked (GlcNAc...) asparagine glycan is attached at Asn130.

It belongs to the IL-10 family. As to quaternary structure, homodimer. Interacts with IL10RA and IL10RB.

The protein localises to the secreted. Functionally, major immune regulatory cytokine that acts on many cells of the immune system where it has profound anti-inflammatory functions, limiting excessive tissue disruption caused by inflammation. Mechanistically, IL10 binds to its heterotetrameric receptor comprising IL10RA and IL10RB leading to JAK1 and STAT2-mediated phosphorylation of STAT3. In turn, STAT3 translocates to the nucleus where it drives expression of anti-inflammatory mediators. Targets antigen-presenting cells (APCs) such as macrophages and monocytes and inhibits their release of pro-inflammatory cytokines including granulocyte-macrophage colony-stimulating factor /GM-CSF, granulocyte colony-stimulating factor/G-CSF, IL-1 alpha, IL-1 beta, IL-6, IL-8 and TNF-alpha. Also interferes with antigen presentation by reducing the expression of MHC-class II and co-stimulatory molecules, thereby inhibiting their ability to induce T cell activation. In addition, controls the inflammatory response of macrophages by reprogramming essential metabolic pathways including mTOR signaling. This is Interleukin-10 (IL10) from Sus scrofa (Pig).